Consider the following 586-residue polypeptide: MFS-type transporter ucsD (586 aa).

A disordered region spans residues 1–56; the sequence is MSRNSGTTLEDGPLHADPTTEAPNNATVTTNVTANDENTEKEVDADAAAAAPAEAP. Composition is skewed to low complexity over residues 19 to 36 and 46 to 56; these read TTEA…TAND and DAAAAAPAEAP. N-linked (GlcNAc...) asparagine glycans are attached at residues Asn-25 and Asn-31. Transmembrane regions (helical) follow at residues 65 to 85, 101 to 121, 131 to 151, 164 to 184, 192 to 212, 220 to 240, 263 to 283, and 290 to 310; these read WAIV…GTII, SFIW…PLMA, WLTL…GGAN, GFGG…LVPL, GIVQ…GGLL, WVFY…FFFL, AIFI…GAVY, and VIVP…YEWT. An N-linked (GlcNAc...) asparagine glycan is attached at Asn-324. 6 helical membrane-spanning segments follow: residues 330–350, 368–388, 393–413, 420–440, 458–478, and 532–552; these read VLGV…FMPI, LPLF…LAKF, PMHL…SLLD, AWAC…AILL, VWTF…SAIF, and LRTV…LIWL.

The protein belongs to the major facilitator superfamily.

It localises to the membrane. Its function is as follows. MFS-type transporter; part of the gene cluster that mediates the biosynthesis of UCS1025A, a member of the pyrrolizidinone family that acts as a strong telomerase inhibitor and displays potent antibacterial and antitumor properties. These compounds share a hemiaminal-containing pyrrolizidinone core fused with a gamma-lactone, giving a furopyrrolizidine that is connected to a decalin fragment. The protein is MFS-type transporter ucsD of Acremonium sp.